Consider the following 782-residue polypeptide: Ribosome biogenesis protein ERB1 (782 aa).

2 disordered regions span residues M1–K123 and P339–E361. Positions S35 to E86 are enriched in acidic residues. Residues V105–K123 are compositionally biased toward basic and acidic residues. 7 WD repeats span residues G433 to S472, N476 to A516, T567 to P609, K612 to V650, P653 to K692, F696 to E736, and V752 to M782.

Belongs to the WD repeat BOP1/ERB1 family. As to quaternary structure, component of the NOP7 complex, composed of ERB1, NOP7 and YTM1. The complex is held together by ERB1, which interacts with NOP7 via its N-terminal domain and with YTM1 via a high-affinity interaction between the seven-bladed beta-propeller domains of the 2 proteins. The NOP7 complex associates with the 66S pre-ribosome.

It is found in the nucleus. The protein resides in the nucleolus. It localises to the nucleoplasm. Its function is as follows. Component of the NOP7 complex, which is required for maturation of the 25S and 5.8S ribosomal RNAs and formation of the 60S ribosome. The chain is Ribosome biogenesis protein ERB1 from Chaetomium globosum (strain ATCC 6205 / CBS 148.51 / DSM 1962 / NBRC 6347 / NRRL 1970) (Soil fungus).